Reading from the N-terminus, the 2224-residue chain is Protein sidekick (2224 aa).

The first 47 residues, 1 to 47 (MLKSAASSLRRRRPKTTITATLAIEMPSQPKLASLLAVLVLLCYCDS), serve as a signal peptide directing secretion. The Extracellular segment spans residues 48–2001 (CFFCYADANL…LQHKPFYRQT (1954 aa)). Positions 72–155 (PRFTTHPSSS…SIFSEKSDVV (84 aa)) constitute an Ig-like C2-type 1 domain. An intrachain disulfide couples C95 to C138. 4 N-linked (GlcNAc...) asparagine glycosylation sites follow: N164, N250, N318, and N327. Ig-like C2-type domains follow at residues 261–355 (PEII…ARLQ), 359–445 (PPLF…NSAS), 455–541 (PIME…AYLS), and 546–636 (TQII…ARLS). Disulfide bonds link C283/C336 and C382/C433. N463, N485, and N491 each carry an N-linked (GlcNAc...) asparagine glycan. 2 disulfide bridges follow: C476/C525 and C567/C620. N-linked (GlcNAc...) asparagine glycans are attached at residues N628, N661, N707, N809, N870, N942, N1019, N1094, N1109, N1172, N1203, N1282, N1329, N1379, N1414, and N1420. Fibronectin type-III domains lie at 643-753 (PPSN…LPQE), 758-855 (PPVG…TKEG), 860-967 (PPTN…TMDD), 971-1065 (EVTG…VEPV), 1069-1164 (APTA…TIQA), 1169-1270 (PPFN…TREA), 1275-1372 (GPLD…TFED), 1376-1469 (VPSN…TNNR), 1474-1570 (APSV…TLPA), 1575-1677 (GVGG…VGEA), 1682-1785 (EPRA…TLPG), 1789-1883 (APLH…GPQD), and 1885-1984 (SPVA…TPSK). N1843 and N1876 each carry an N-linked (GlcNAc...) asparagine glycan. Residues 2002–2022 (WFMVSLAATSIVIIVMVIAVL) form a helical membrane-spanning segment. At 2023–2224 (CVKSKSYKYK…APLPGFSSFV (202 aa)) the chain is on the cytoplasmic side. Disordered regions lie at residues 2068 to 2157 (TLNS…RSDP) and 2171 to 2195 (LRQSWKKTKPVRNYSSYTDSEPEGS). S2071 carries the phosphoserine modification. Positions 2073–2085 (GTLRSGTLGTLGR) are enriched in low complexity. T2074 is modified (phosphothreonine). 2 stretches are compositionally biased toward basic and acidic residues: residues 2112 to 2122 (HSDEESLKCYD) and 2144 to 2157 (QHSESENESVRSDP). Phosphoserine is present on residues S2113 and S2117.

It belongs to the sidekick family.

The protein resides in the membrane. Functionally, participates in homotypic or heterotypic interactions in the eye during pattern formation to prevent extra cells from joining the precluster and differentiating as photoreceptor cells. The sequence is that of Protein sidekick from Drosophila melanogaster (Fruit fly).